The chain runs to 120 residues: Holo-[acyl-carrier-protein] synthase (120 aa).

Residues aspartate 8 and glutamate 58 each coordinate Mg(2+).

Belongs to the P-Pant transferase superfamily. AcpS family. The cofactor is Mg(2+).

The protein localises to the cytoplasm. It catalyses the reaction apo-[ACP] + CoA = holo-[ACP] + adenosine 3',5'-bisphosphate + H(+). Its function is as follows. Transfers the 4'-phosphopantetheine moiety from coenzyme A to a Ser of acyl-carrier-protein. In Limosilactobacillus reuteri (strain DSM 20016) (Lactobacillus reuteri), this protein is Holo-[acyl-carrier-protein] synthase.